The following is a 488-amino-acid chain: Inositol 1,3,4-trisphosphate 5/6-kinase 4 (488 aa).

Residues Lys-208 and Lys-224 each coordinate 1D-myo-inositol 1,3,4-trisphosphate. An ATP-grasp domain is found at 246-488; it reads NACAIVDPIR…RFDQHVQEKH (243 aa). Residues Arg-263 and Lys-315 each contribute to the ATP site. 1D-myo-inositol 1,3,4-trisphosphate-binding residues include His-326 and Lys-360. Residues 349–360, Ser-375, and Ser-398 contribute to the ATP site; that span reads QEYVDHSSRIFK. Mg(2+) contacts are provided by Asp-439, Asp-453, and Asn-455. Residues Asn-455 and Ser-459 each coordinate 1D-myo-inositol 1,3,4-trisphosphate.

The protein belongs to the ITPK1 family. As to quaternary structure, monomer. Mg(2+) is required as a cofactor. As to expression, expressed in roots, leaf vasculature, cauline leaves, flower buds and siliques.

The catalysed reaction is 1D-myo-inositol 1,3,4-trisphosphate + ATP = 1D-myo-inositol 1,3,4,5-tetrakisphosphate + ADP + H(+). It carries out the reaction 1D-myo-inositol 1,3,4-trisphosphate + ATP = 1D-myo-inositol 1,3,4,6-tetrakisphosphate + ADP + H(+). Kinase that can phosphorylate the inositol polyphosphate Ins(1,3,4)P3 to form InsP4. Also phosphorylates a racemic mixture of Ins(1,4,6)P3 and Ins(3,4,6)P3 to form InsP4. Does not display inositol 3,4,5,6-tetrakisphosphate 1-kinase activity, but possesses inositol 1,4,5,6-tetrakisphosphate and inositol 1,3,4,5-tetrakisphosphate isomerase activity. Ins(1,3,4,6)P4 is an essential molecule in the hexakisphosphate (InsP6) pathway. This Arabidopsis thaliana (Mouse-ear cress) protein is Inositol 1,3,4-trisphosphate 5/6-kinase 4 (ITPK4).